Here is a 466-residue protein sequence, read N- to C-terminus: Soluble pyridine nucleotide transhydrogenase (466 aa).

36 to 45 lines the FAD pocket; sequence ERYHNVGGGC.

Belongs to the class-I pyridine nucleotide-disulfide oxidoreductase family. FAD serves as cofactor.

Its subcellular location is the cytoplasm. It carries out the reaction NAD(+) + NADPH = NADH + NADP(+). Its function is as follows. Conversion of NADPH, generated by peripheral catabolic pathways, to NADH, which can enter the respiratory chain for energy generation. The polypeptide is Soluble pyridine nucleotide transhydrogenase (Klebsiella pneumoniae subsp. pneumoniae (strain ATCC 700721 / MGH 78578)).